The primary structure comprises 141 residues: Large ribosomal subunit protein uL11 (141 aa).

It belongs to the universal ribosomal protein uL11 family. In terms of assembly, part of the ribosomal stalk of the 50S ribosomal subunit. Interacts with L10 and the large rRNA to form the base of the stalk. L10 forms an elongated spine to which L12 dimers bind in a sequential fashion forming a multimeric L10(L12)X complex. One or more lysine residues are methylated.

Its function is as follows. Forms part of the ribosomal stalk which helps the ribosome interact with GTP-bound translation factors. This is Large ribosomal subunit protein uL11 from Helicobacter hepaticus (strain ATCC 51449 / 3B1).